The chain runs to 293 residues: Formamidopyrimidine-DNA glycosylase (293 aa).

Catalysis depends on Pro-2, which acts as the Schiff-base intermediate with DNA. Glu-3 functions as the Proton donor in the catalytic mechanism. Catalysis depends on Lys-58, which acts as the Proton donor; for beta-elimination activity. Positions 104, 127, and 170 each coordinate DNA. An FPG-type zinc finger spans residues 257–293 (SVYGREGKPCRNPACGGTVERVVQSGRSTFFCASCQT). Arg-283 functions as the Proton donor; for delta-elimination activity in the catalytic mechanism.

This sequence belongs to the FPG family. In terms of assembly, monomer. Zn(2+) is required as a cofactor.

It carries out the reaction Hydrolysis of DNA containing ring-opened 7-methylguanine residues, releasing 2,6-diamino-4-hydroxy-5-(N-methyl)formamidopyrimidine.. It catalyses the reaction 2'-deoxyribonucleotide-(2'-deoxyribose 5'-phosphate)-2'-deoxyribonucleotide-DNA = a 3'-end 2'-deoxyribonucleotide-(2,3-dehydro-2,3-deoxyribose 5'-phosphate)-DNA + a 5'-end 5'-phospho-2'-deoxyribonucleoside-DNA + H(+). Its function is as follows. Involved in base excision repair of DNA damaged by oxidation or by mutagenic agents. Acts as a DNA glycosylase that recognizes and removes damaged bases. Has a preference for oxidized purines, such as 7,8-dihydro-8-oxoguanine (8-oxoG). Has AP (apurinic/apyrimidinic) lyase activity and introduces nicks in the DNA strand. Cleaves the DNA backbone by beta-delta elimination to generate a single-strand break at the site of the removed base with both 3'- and 5'-phosphates. The sequence is that of Formamidopyrimidine-DNA glycosylase from Brucella melitensis biotype 1 (strain ATCC 23456 / CCUG 17765 / NCTC 10094 / 16M).